A 151-amino-acid polypeptide reads, in one-letter code: MNPSARRRARECVVQALYAWQVSQNDIAEVELSFLADQETQGADIAYFRHVLLGVASDVEALDTLMTPYLSRQFQELGQIEKAILRLAMFELNKRDDVPYKVTINEAIELGKTFGADDSHKFINGVLDKAAPIIRKRMQIRSQNGPYQSVC.

Belongs to the NusB family.

Functionally, involved in transcription antitermination. Required for transcription of ribosomal RNA (rRNA) genes. Binds specifically to the boxA antiterminator sequence of the ribosomal RNA (rrn) operons. The polypeptide is Transcription antitermination protein NusB (Hamiltonella defensa subsp. Acyrthosiphon pisum (strain 5AT)).